A 286-amino-acid chain; its full sequence is Shikimate dehydrogenase (NADP(+)) (286 aa).

Shikimate-binding positions include 20 to 22 (SLS) and Ser-67. The Proton acceptor role is filled by Lys-71. Residues Asn-92 and Asp-107 each contribute to the shikimate site. NADP(+) is bound by residues 131–135 (GGGGA) and Ala-230. Tyr-232 contacts shikimate. Gly-253 provides a ligand contact to NADP(+).

This sequence belongs to the shikimate dehydrogenase family. In terms of assembly, homodimer.

It carries out the reaction shikimate + NADP(+) = 3-dehydroshikimate + NADPH + H(+). It participates in metabolic intermediate biosynthesis; chorismate biosynthesis; chorismate from D-erythrose 4-phosphate and phosphoenolpyruvate: step 4/7. In terms of biological role, involved in the biosynthesis of the chorismate, which leads to the biosynthesis of aromatic amino acids. Catalyzes the reversible NADPH linked reduction of 3-dehydroshikimate (DHSA) to yield shikimate (SA). The chain is Shikimate dehydrogenase (NADP(+)) from Lactococcus lactis subsp. lactis (strain IL1403) (Streptococcus lactis).